A 402-amino-acid chain; its full sequence is MKAVTLLGSTGSIGTQTLDILEQYPDRFRLVGLAAGRNVALLSEQIRRHRPEIVAIQDAAQLSELQAAIADLDNPPLILTGEAGVTEVARYGDAEIVVTGIVGCAGLLPTIAAIEAGKDIALANKETLIAAGPVVLPLLQKHGVTITPADSEHSAIFQCIQGLSTHADFRPAQVVAGLRRILLTASGGAFRDWPVERLSQVTVADALKHPNWSMGRKITVDSATLMNKGLEVIEAHYLFGLDYDYIDIVIHPQSIIHSLIELEDTSVLAQLGWPDMRLPLLYALSWPDRLSTQWSALDLVKAGSLEFREPDHAKYPCMDLAYAAGRKGGTMPAVLNAANEQAVALFLEEQIHFSDIPRLIERACDRHQTEWQQQPSLDDILAYDAWARQFVQASYQSLESVV.

Residues Thr-10, Gly-11, Ser-12, Ile-13, Gly-36, Arg-37, Asn-38, and Asn-124 each contribute to the NADPH site. Lys-125 is a binding site for 1-deoxy-D-xylulose 5-phosphate. Glu-126 contributes to the NADPH binding site. Asp-150 provides a ligand contact to Mn(2+). 1-deoxy-D-xylulose 5-phosphate is bound by residues Ser-151, Glu-152, Ser-186, and His-209. Residue Glu-152 coordinates Mn(2+). Gly-215 is a binding site for NADPH. Ser-222, Asn-227, Lys-228, and Glu-231 together coordinate 1-deoxy-D-xylulose 5-phosphate. Residue Glu-231 participates in Mn(2+) binding.

It belongs to the DXR family. Requires Mg(2+) as cofactor. Mn(2+) is required as a cofactor.

The catalysed reaction is 2-C-methyl-D-erythritol 4-phosphate + NADP(+) = 1-deoxy-D-xylulose 5-phosphate + NADPH + H(+). It functions in the pathway isoprenoid biosynthesis; isopentenyl diphosphate biosynthesis via DXP pathway; isopentenyl diphosphate from 1-deoxy-D-xylulose 5-phosphate: step 1/6. With respect to regulation, inhibited by fosmidomycin. Catalyzes the NADPH-dependent rearrangement and reduction of 1-deoxy-D-xylulose-5-phosphate (DXP) to 2-C-methyl-D-erythritol 4-phosphate (MEP). The protein is 1-deoxy-D-xylulose 5-phosphate reductoisomerase of Synechococcus sp. (strain ATCC 27144 / PCC 6301 / SAUG 1402/1) (Anacystis nidulans).